Consider the following 228-residue polypeptide: Glycerol-3-phosphate acyltransferase (228 aa).

6 helical membrane-spanning segments follow: residues 1–21 (MINW…LGAT), 56–76 (VPAL…IALV), 104–124 (MVII…WIGF), 136–156 (ILLA…IVVL), 161–181 (IVSL…FFTG), and 183–203 (PLPY…RHIS).

Belongs to the PlsY family. Probably interacts with PlsX.

Its subcellular location is the cell inner membrane. It carries out the reaction an acyl phosphate + sn-glycerol 3-phosphate = a 1-acyl-sn-glycero-3-phosphate + phosphate. The protein operates within lipid metabolism; phospholipid metabolism. In terms of biological role, catalyzes the transfer of an acyl group from acyl-phosphate (acyl-PO(4)) to glycerol-3-phosphate (G3P) to form lysophosphatidic acid (LPA). This enzyme utilizes acyl-phosphate as fatty acyl donor, but not acyl-CoA or acyl-ACP. This Trichodesmium erythraeum (strain IMS101) protein is Glycerol-3-phosphate acyltransferase.